Here is a 410-residue protein sequence, read N- to C-terminus: Cysteine desulfurase IscS (410 aa).

Pyridoxal 5'-phosphate-binding positions include 80-81, N160, Q188, and 208-210; these read AT and SGH. K211 is subject to N6-(pyridoxal phosphate)lysine. T248 is a pyridoxal 5'-phosphate binding site. Catalysis depends on C334, which acts as the Cysteine persulfide intermediate. C334 is a binding site for [2Fe-2S] cluster.

It belongs to the class-V pyridoxal-phosphate-dependent aminotransferase family. NifS/IscS subfamily. In terms of assembly, homodimer. Forms a heterotetramer with IscU, interacts with other sulfur acceptors. Pyridoxal 5'-phosphate is required as a cofactor.

The protein resides in the cytoplasm. It carries out the reaction (sulfur carrier)-H + L-cysteine = (sulfur carrier)-SH + L-alanine. It participates in cofactor biosynthesis; iron-sulfur cluster biosynthesis. Master enzyme that delivers sulfur to a number of partners involved in Fe-S cluster assembly, tRNA modification or cofactor biosynthesis. Catalyzes the removal of elemental sulfur atoms from cysteine to produce alanine. Functions as a sulfur delivery protein for Fe-S cluster synthesis onto IscU, an Fe-S scaffold assembly protein, as well as other S acceptor proteins. The sequence is that of Cysteine desulfurase IscS from Rickettsia peacockii (strain Rustic).